The primary structure comprises 163 residues: Putative pre-16S rRNA nuclease (163 aa).

Belongs to the YqgF nuclease family.

It localises to the cytoplasm. Could be a nuclease involved in processing of the 5'-end of pre-16S rRNA. This is Putative pre-16S rRNA nuclease from Nitrobacter winogradskyi (strain ATCC 25391 / DSM 10237 / CIP 104748 / NCIMB 11846 / Nb-255).